The following is a 48-amino-acid chain: Large ribosomal subunit protein bL33B (48 aa).

It belongs to the bacterial ribosomal protein bL33 family.

This is Large ribosomal subunit protein bL33B (rpmG2) from Mycoplasma pneumoniae (strain ATCC 29342 / M129 / Subtype 1) (Mycoplasmoides pneumoniae).